The chain runs to 115 residues: MHIKLGDKVAIIAGKNRFVTDENGKKIIKTGKILKIFHKQQKVLVEGINIVFKHKAPLKDEDKGNIIKQEAPIHISNVALIDSLKNVPTRVGYRIENNKKVRYFKKSGTIIEDLN.

Belongs to the universal ribosomal protein uL24 family. As to quaternary structure, part of the 50S ribosomal subunit.

One of two assembly initiator proteins, it binds directly to the 5'-end of the 23S rRNA, where it nucleates assembly of the 50S subunit. Its function is as follows. One of the proteins that surrounds the polypeptide exit tunnel on the outside of the subunit. This Phytoplasma mali (strain AT) protein is Large ribosomal subunit protein uL24.